A 311-amino-acid chain; its full sequence is HTH-type transcriptional regulator PcaQ (311 aa).

Residues 6–63 form the HTH lysR-type domain; the sequence is IKFRHLQTFVEVARQKSVIRAAEILHVSQPAVTKTIRELEDVLGVSLLEREGRGIRIS. Residues 23-42 constitute a DNA-binding region (H-T-H motif); sequence VIRAAEILHVSQPAVTKTIR.

It belongs to the LysR transcriptional regulatory family.

Functionally, activates transcription of the pcaDCHGB operon for the catabolism of the phenolic compound protocatechuate. This is HTH-type transcriptional regulator PcaQ (pcaQ) from Agrobacterium fabrum (strain C58 / ATCC 33970) (Agrobacterium tumefaciens (strain C58)).